Reading from the N-terminus, the 244-residue chain is NH(3)-dependent NAD(+) synthetase (244 aa).

ATP is bound at residue 29–36 (GISGGIDS). Residue Asp-35 participates in Mg(2+) binding. Arg-113 is a binding site for deamido-NAD(+). Residue Thr-133 coordinates ATP. Residue Glu-138 coordinates Mg(2+). Positions 146 and 153 each coordinate deamido-NAD(+). Residues Lys-162 and Thr-184 each coordinate ATP. Deamido-NAD(+) is bound at residue 230 to 231 (HK).

Belongs to the NAD synthetase family. In terms of assembly, homodimer.

The catalysed reaction is deamido-NAD(+) + NH4(+) + ATP = AMP + diphosphate + NAD(+) + H(+). The protein operates within cofactor biosynthesis; NAD(+) biosynthesis; NAD(+) from deamido-NAD(+) (ammonia route): step 1/1. Its function is as follows. Catalyzes the ATP-dependent amidation of deamido-NAD to form NAD. Uses ammonia as a nitrogen source. The chain is NH(3)-dependent NAD(+) synthetase from Mesoplasma florum (strain ATCC 33453 / NBRC 100688 / NCTC 11704 / L1) (Acholeplasma florum).